The primary structure comprises 268 residues: uncharacterized protein (268 aa).

This is an uncharacterized protein from Acanthamoeba polyphaga mimivirus (APMV).